The chain runs to 205 residues: Large ribosomal subunit protein uL4 (205 aa).

It belongs to the universal ribosomal protein uL4 family. Part of the 50S ribosomal subunit.

In terms of biological role, one of the primary rRNA binding proteins, this protein initially binds near the 5'-end of the 23S rRNA. It is important during the early stages of 50S assembly. It makes multiple contacts with different domains of the 23S rRNA in the assembled 50S subunit and ribosome. Functionally, forms part of the polypeptide exit tunnel. This Roseobacter denitrificans (strain ATCC 33942 / OCh 114) (Erythrobacter sp. (strain OCh 114)) protein is Large ribosomal subunit protein uL4.